The sequence spans 87 residues: Mitochondrial import inner membrane translocase subunit TIM9 (87 aa).

At methionine 1 the chain carries N-acetylmethionine. Residues 35–59 (CFTDCVNDFTTSKLTNKEQTCIMKC) carry the Twin CX3C motif motif. 2 cysteine pairs are disulfide-bonded: cysteine 35–cysteine 59 and cysteine 39–cysteine 55.

The protein belongs to the small Tim family. Heterohexamer; composed of 3 copies of TIM9 and 3 copies of TIM10, named soluble 70 kDa complex. Associates with the TIM12 component of the TIM22 complex, whose core is composed of TIM18, TIM22 and TIM54. Interacts with the transmembrane regions of multi-pass transmembrane proteins in transit.

It localises to the mitochondrion inner membrane. Its subcellular location is the mitochondrion intermembrane space. Mitochondrial intermembrane chaperone that participates in the import and insertion of multi-pass transmembrane proteins into the mitochondrial inner membrane. Also required for the transfer of beta-barrel precursors from the TOM complex to the sorting and assembly machinery (SAM complex) of the outer membrane. Acts as a chaperone-like protein that protects the hydrophobic precursors from aggregation and guide them through the mitochondrial intermembrane space. Compared to TIM10, it may have a strong structural role. The protein is Mitochondrial import inner membrane translocase subunit TIM9 (TIM9) of Saccharomyces cerevisiae (strain ATCC 204508 / S288c) (Baker's yeast).